The sequence spans 186 residues: UPF0301 protein PM1869 (186 aa).

This sequence belongs to the UPF0301 (AlgH) family.

The protein is UPF0301 protein PM1869 of Pasteurella multocida (strain Pm70).